The following is a 489-amino-acid chain: Glycogen synthase (489 aa).

Position 18 (Lys18) interacts with ADP-alpha-D-glucose.

Belongs to the glycosyltransferase 1 family. Bacterial/plant glycogen synthase subfamily.

It carries out the reaction [(1-&gt;4)-alpha-D-glucosyl](n) + ADP-alpha-D-glucose = [(1-&gt;4)-alpha-D-glucosyl](n+1) + ADP + H(+). Its pathway is glycan biosynthesis; glycogen biosynthesis. Functionally, synthesizes alpha-1,4-glucan chains using ADP-glucose. This is Glycogen synthase from Rhodopseudomonas palustris (strain BisB18).